The sequence spans 435 residues: MSVKWERDSDAPKGTLTFDIDTETIQKGIDHAFTRTQKRISVPGFRKGHVPRTIFNQMYGEESLYQDALNDVLPDAYEAAIKEAGIEPVDQPQVNVESMEKGQPWTLTATVAVKPEVTLGDYKGMEVPEQDTSVSDADVDSELENKRQQQAELVLKEDEAAADGDTVVIDYEGSVDGEKFDGGSADNYSLVLGSGSFIPGFEDQLVGHKAGEDVDVNVTFPEDYHAKDLAGKDALFKVKIHEVKEKQLPELDDEFAKDVDEDVETLAELKDKVKKQLQDQKEAAAKAAIEDAAIEAAVANAETEEIPQAMLDDDTNRQLQQYLAGMQQQGINPQMYFQITNTTEDDLRKQFADDAAKRVKTNLVLEAVVKDANLNATDEDVQNEIADLAKQYGMDEEAVSKALTRDMLEHDIEIKKAVDLIADSAKQTAKAADKD.

Residues 125–147 (MEVPEQDTSVSDADVDSELENKR) form a disordered region. One can recognise a PPIase FKBP-type domain in the interval 164–249 (GDTVVIDYEG…IHEVKEKQLP (86 aa)).

This sequence belongs to the FKBP-type PPIase family. Tig subfamily.

The protein resides in the cytoplasm. The enzyme catalyses [protein]-peptidylproline (omega=180) = [protein]-peptidylproline (omega=0). Its function is as follows. Involved in protein export. Acts as a chaperone by maintaining the newly synthesized protein in an open conformation. Functions as a peptidyl-prolyl cis-trans isomerase. This is Trigger factor from Limosilactobacillus fermentum (strain NBRC 3956 / LMG 18251) (Lactobacillus fermentum).